A 934-amino-acid chain; its full sequence is Diacylglycerol kinase theta (934 aa).

The interval 1-50 is disordered; the sequence is MAAAAEPGARTWPGSGSPRLGSPAGSPVLGISGRTRPGSGPERTSRAIGS. Phosphoserine is present on residues Ser22 and Ser26. 3 Phorbol-ester/DAG-type zinc fingers span residues 54 to 102, 115 to 162, and 177 to 228; these read GHSF…KTPC, AHCF…CSDC, and HHHW…APEC. Residues 387-486 enclose the Ras-associating domain; sequence TQEILKIYPG…TRFYVAETRA (100 aa). Short sequence motifs (LXXLL motif) lie at residues 547 to 551 and 566 to 570; these read LYMLA and LPDVL. Residues 576-713 enclose the DAGKc domain; the sequence is PDCCPLLVFV…MDRWTILLDA (138 aa). The span at 905–916 shows a compositional bias: basic residues; sequence LRKAKQKPRKAG. Residues 905 to 934 form a disordered region; it reads LRKAKQKPRKAGANRDTRVDTLPAPEGNPL.

It belongs to the eukaryotic diacylglycerol kinase family. Interacts with RHOA (constitutively activated, GTP-bound); the interaction inhibits DGKQ. Interacts with PRKCE. Interacts with PRKCH. Interacts with PLCB1. Interacts with NR5A1; the interaction requires both LXXLL motifs in DGKQ and is required for full phosphatidic acid-mediated activation of NR5A1. Phosphorylated by PRKCE and PRKCH in vitro. In terms of tissue distribution, widely expressed in all brain regions, including the cortex and hippocampus with a specific expression in neuronal cells (at protein level).

Its subcellular location is the cytoplasm. The protein resides in the cytosol. It is found in the cell membrane. It localises to the synapse. The protein localises to the cytoskeleton. Its subcellular location is the nucleus. The protein resides in the nucleus speckle. It is found in the nucleus matrix. It carries out the reaction a 1,2-diacyl-sn-glycerol + ATP = a 1,2-diacyl-sn-glycero-3-phosphate + ADP + H(+). It catalyses the reaction a 1-O-alkyl-sn-glycerol + ATP = a 1-O-alkyl-sn-glycero-3-phosphate + ADP + H(+). The catalysed reaction is 1-O-alkyl-2-acyl-sn-glycerol + ATP = 1-O-alkyl-2-acyl-sn-glycero-3-phosphate + ADP + H(+). The enzyme catalyses 1,2-di-(9Z-octadecenoyl)-sn-glycerol + ATP = 1,2-di-(9Z-octadecenoyl)-sn-glycero-3-phosphate + ADP + H(+). It carries out the reaction 1-O-hexadecyl-sn-glycerol + ATP = 1-O-hexadecyl-sn-glycero-3-phosphate + ADP + H(+). It catalyses the reaction 1-O-hexadecyl-2-acetyl-sn-glycerol + ATP = 1-O-hexadecyl-2-acetyl-sn-glycero-3-phosphate + ADP + H(+). The catalysed reaction is 1-octadecanoyl-2-(5Z,8Z,11Z,14Z-eicosatetraenoyl)-sn-glycerol + ATP = 1-octadecanoyl-2-(5Z,8Z,11Z,14Z-eicosatetraenoyl)-sn-glycero-3-phosphate + ADP + H(+). It functions in the pathway lipid metabolism; glycerolipid metabolism. Its activity is regulated as follows. Activated by phosphatidylserine. In terms of biological role, diacylglycerol kinase that converts diacylglycerol/DAG into phosphatidic acid/phosphatidate/PA and regulates the respective levels of these two bioactive lipids. Thereby, acts as a central switch between the signaling pathways activated by these second messengers with different cellular targets and opposite effects in numerous biological processes. Within the adrenocorticotropic hormone signaling pathway, produces phosphatidic acid which in turn activates NR5A1 and subsequent steroidogenic gene transcription. Also functions downstream of the nerve growth factor signaling pathway being specifically activated in the nucleus by the growth factor. Through its diacylglycerol activity also regulates synaptic vesicle endocytosis. The protein is Diacylglycerol kinase theta (Dgkq) of Mus musculus (Mouse).